A 489-amino-acid chain; its full sequence is MGNCADCLRGFFCPPKNTNIRISLPAVCFVWQIAMIVLFGVFIRYDAESDIRLWLQLKHTNNITSDIENDFYFRYPSFQDVHVMIFVGFGFLMTFLKRYSFGGVGFNFLIGAFGLQWALLMQGWFHALDPTTGKISIGVEGLINADFCVAASLIAYGALLGKVSPVQLMVVTLFGVTLFAVEEYIILNLLHCRDAGGSMVIHCFGGYYGLTISWILYRPKLHQSKRLNGSVYHSDVFAMIGTLFLWMFWPSFNSAITDHGSGQHRTAINTYIALASSVLTTVAISSASEKRGKLDMVHIQNATLAGGVAMGTAAEFMITPYGALIVGFCTGIISTFGYLFVSPFMEKYLKIQDTCGVHNLHAMPGMLGGFIGAIVAAAATEEVYSREGLIETFDFEGKFADRTVGTQGGFQAAGVCVAIAFAVVGGAVVGLILRLPIWGDPADDNCFDDEVYWEVPEDEEGILPVLEYNNHMTHKHQDISESNFSVEQS.

At 1 to 21 (MGNCADCLRGFFCPPKNTNIR) the chain is on the cytoplasmic side. A helical transmembrane segment spans residues 22 to 42 (ISLPAVCFVWQIAMIVLFGVF). At 43–75 (IRYDAESDIRLWLQLKHTNNITSDIENDFYFRY) the chain is on the extracellular side. A glycan (N-linked (GlcNAc...) asparagine) is linked at asparagine 62. A helical transmembrane segment spans residues 76 to 96 (PSFQDVHVMIFVGFGFLMTFL). The Cytoplasmic portion of the chain corresponds to 97-100 (KRYS). Residues 101–121 (FGGVGFNFLIGAFGLQWALLM) form a helical membrane-spanning segment. At 122–140 (QGWFHALDPTTGKISIGVE) the chain is on the extracellular side. Residues 141 to 161 (GLINADFCVAASLIAYGALLG) form a helical membrane-spanning segment. The Cytoplasmic portion of the chain corresponds to 162–169 (KVSPVQLM). Residues 170–190 (VVTLFGVTLFAVEEYIILNLL) form a helical membrane-spanning segment. Topologically, residues 191 to 195 (HCRDA) are extracellular. The chain crosses the membrane as a helical span at residues 196–216 (GGSMVIHCFGGYYGLTISWIL). The Cytoplasmic segment spans residues 217-235 (YRPKLHQSKRLNGSVYHSD). A helical membrane pass occupies residues 236-256 (VFAMIGTLFLWMFWPSFNSAI). Residues 257-266 (TDHGSGQHRT) lie on the Extracellular side of the membrane. The helical transmembrane segment at 267-287 (AINTYIALASSVLTTVAISSA) threads the bilayer. Residues 288–298 (SEKRGKLDMVH) lie on the Cytoplasmic side of the membrane. A helical transmembrane segment spans residues 299-319 (IQNATLAGGVAMGTAAEFMIT). A topological domain (extracellular) is located at residue proline 320. A helical transmembrane segment spans residues 321–341 (YGALIVGFCTGIISTFGYLFV). Residues 342-359 (SPFMEKYLKIQDTCGVHN) are Cytoplasmic-facing. A helical transmembrane segment spans residues 360-380 (LHAMPGMLGGFIGAIVAAAAT). Residues 381–412 (EEVYSREGLIETFDFEGKFADRTVGTQGGFQA) are Extracellular-facing. Residues 413-433 (AGVCVAIAFAVVGGAVVGLIL) form a helical membrane-spanning segment. Over 434–489 (RLPIWGDPADDNCFDDEVYWEVPEDEEGILPVLEYNNHMTHKHQDISESNFSVEQS) the chain is Cytoplasmic.

Belongs to the ammonium transporter (TC 2.A.49) family. Rh subfamily. In terms of assembly, homotrimer.

The protein resides in the apical cell membrane. Functionally, functions as an ammonia transporter. May play a role in the elimination of ammonia in the gill. This chain is Ammonium transporter Rh type C (rhcg), found in Gasterosteus aculeatus (Three-spined stickleback).